Reading from the N-terminus, the 395-residue chain is Elongation factor Tu (395 aa).

The 195-residue stretch at lysine 10–glutamate 204 folds into the tr-type G domain. A G1 region spans residues glycine 19–threonine 26. Glycine 19 to threonine 26 serves as a coordination point for GTP. Threonine 26 contributes to the Mg(2+) binding site. A G2 region spans residues glycine 60 to asparagine 64. The tract at residues aspartate 81 to glycine 84 is G3. Residues aspartate 81–histidine 85 and asparagine 136–aspartate 139 each bind GTP. The segment at asparagine 136–aspartate 139 is G4. The segment at serine 174–leucine 176 is G5.

This sequence belongs to the TRAFAC class translation factor GTPase superfamily. Classic translation factor GTPase family. EF-Tu/EF-1A subfamily. In terms of assembly, monomer.

It is found in the cytoplasm. It catalyses the reaction GTP + H2O = GDP + phosphate + H(+). Its function is as follows. GTP hydrolase that promotes the GTP-dependent binding of aminoacyl-tRNA to the A-site of ribosomes during protein biosynthesis. The chain is Elongation factor Tu from Lactococcus lactis subsp. lactis (strain IL1403) (Streptococcus lactis).